The sequence spans 499 residues: MAKQKIRVRYAPSPTGHLHIGNARTALFNYLFARHNKGTMVLRIEDTDQKRNVEGGSKSQMENLHWLGIDWDEGPDKGGDFGPYRQSERKDIYNKYIQQLIDEGKAYYSYKTEEELEAQREEQRAMGIAPHYTYEYEGMTADEIKEAQAAAEAKGLKPVVRIHIPENRTYAWEDMVKGKVSFESDTIGGDFVIQKRDGMPTYNFAVVIDDHLMEITHVLRGDDHVANTPKQLVVYEALGWEPPKFGHMTLIINSETGKKLSKRDESVLQFIEQYRDLGYLPDAMFNFITLLGWSPVGESEIFSQRELIKSFDPKRLSKSPAAFDQKKLEWINNQYVKKADRDLLLDLALNNLQEAGLVDKEISPEKMEWVRQLVNIYAVQMSYTKQIVDIAKIFFEEAPELSDAEIEEIKKDDARPVIEEFKKQLNAVPRFTAVQAMNAIQATRRETGVKGRKLFMPIRIAATRSMVGPGIGEAIELMGKEKVNKHIDLTLKQLSDLGL.

The short motif at 12-22 (PSPTGHLHIGN) is the 'HIGH' region element. The 'KMSKS' region motif lies at 259 to 263 (KLSKR). Lysine 262 lines the ATP pocket.

The protein belongs to the class-I aminoacyl-tRNA synthetase family. Glutamate--tRNA ligase type 1 subfamily. As to quaternary structure, monomer.

It is found in the cytoplasm. The enzyme catalyses tRNA(Glu) + L-glutamate + ATP = L-glutamyl-tRNA(Glu) + AMP + diphosphate. Catalyzes the attachment of glutamate to tRNA(Glu) in a two-step reaction: glutamate is first activated by ATP to form Glu-AMP and then transferred to the acceptor end of tRNA(Glu). This chain is Glutamate--tRNA ligase, found in Lactobacillus johnsonii (strain CNCM I-12250 / La1 / NCC 533).